We begin with the raw amino-acid sequence, 158 residues long: MKDESVLNVLMYLFKNHMQENCTLDLGEKKLLVQLEELGFHRTVIDQALSWLNNLSYSGREPMQLPQKNSFRVFSDYECDLLDTECRRFLITLEQQAILNPHTRELVINQALELSCEGIDVSLLKWVTLMVLFNQSSEKEALASMELLVLDDTVGGIH.

This sequence belongs to the Smg family.

This chain is Protein Smg homolog, found in Coxiella burnetii (strain RSA 331 / Henzerling II).